The following is a 459-amino-acid chain: Ribulose bisphosphate carboxylase large chain (459 aa).

Positions 1 to 2 (MS) are excised as a propeptide. Pro-3 bears the N-acetylproline mark. Position 14 is an N6,N6,N6-trimethyllysine (Lys-14). 2 residues coordinate substrate: Asn-123 and Thr-173. Catalysis depends on Lys-175, which acts as the Proton acceptor. Lys-177 provides a ligand contact to substrate. Mg(2+) is bound by residues Lys-201, Asp-203, and Glu-204. Lys-201 carries the N6-carboxylysine modification. The active-site Proton acceptor is His-294. Residues Arg-295, His-327, and Ser-379 each coordinate substrate.

It belongs to the RuBisCO large chain family. Type I subfamily. Heterohexadecamer of 8 large chains and 8 small chains; disulfide-linked. The disulfide link is formed within the large subunit homodimers. The cofactor is Mg(2+). Post-translationally, the disulfide bond which can form in the large chain dimeric partners within the hexadecamer appears to be associated with oxidative stress and protein turnover.

It is found in the plastid. It localises to the chloroplast. The enzyme catalyses 2 (2R)-3-phosphoglycerate + 2 H(+) = D-ribulose 1,5-bisphosphate + CO2 + H2O. It catalyses the reaction D-ribulose 1,5-bisphosphate + O2 = 2-phosphoglycolate + (2R)-3-phosphoglycerate + 2 H(+). In terms of biological role, ruBisCO catalyzes two reactions: the carboxylation of D-ribulose 1,5-bisphosphate, the primary event in carbon dioxide fixation, as well as the oxidative fragmentation of the pentose substrate in the photorespiration process. Both reactions occur simultaneously and in competition at the same active site. In Streptopus lanceolatus (Rose twisted stalk), this protein is Ribulose bisphosphate carboxylase large chain.